The primary structure comprises 4095 residues: Protein adenylyltransferase and cysteine protease IbpA (4095 aa).

The signal sequence occupies residues 1 to 97 (MNKNCYKLIF…MVAAPNFAQS (97 aa)). Binds bovine IgG2 Fc regions lie at residues 972 to 1515 (SERI…FVKA) and 1116 to 1255 (SEVQ…FLKE). 5 disordered regions span residues 1082–1117 (EVSD…LPSE), 1130–1154 (KEKA…LQSD), 1204–1223 (QEAL…AKAK), 1625–1652 (TVSH…TGFT), and 1705–1732 (EEDE…QKEE). The segment covering 1087–1096 (WERDPDEPDE) has biased composition (acidic residues). Composition is skewed to basic and acidic residues over residues 1097 to 1117 (PDYK…LPSE) and 1130 to 1139 (KEKAQQKRQA). A coiled-coil region spans residues 1116 to 1247 (SEVQDKLRQK…AKDHQIEEAL (132 aa)). Over residues 1716 to 1727 (KAKAAPDATDNA) the composition is skewed to low complexity. 12 consecutive repeat copies span residues 2250–2271 (YSTL…SDDI), 2272–2295 (YSLL…AEGA), 2296–2317 (YDLL…SDDL), 2318–2343 (YSTV…AAGP), 2344–2365 (YSLL…GEGP), 2366–2387 (YSLL…SNST), 2388–2413 (YSTV…VAGP), 2414–2435 (YSLL…GEGP), 2436–2457 (YSLL…SDSP), 2458–2483 (YSTV…VAGP), 2484–2505 (YSLL…GEGP), and 2506–2527 (YSLL…SDSP). Residues 2250-2527 (YSTLGDQNAN…RTLGGESDSP (278 aa)) form a 12 X 22 AA approximate repeats region. Polar residues-rich tracts occupy residues 2592–2611 (SDTE…TRNA) and 2794–2803 (TAPQKTSPVK). 6 disordered regions span residues 2592–2617 (SDTE…PLPP), 2765–2809 (TIGE…SAEG), 2825–2894 (AKGQ…SPKR), 2914–2933 (LKSK…EPIY), 2943–3033 (LARA…KSED), and 3049–3069 (NKSQ…PNYD). Residues 2880–2889 (PFPSEFSSEP) are compositionally biased toward low complexity. 2 stretches are compositionally biased toward polar residues: residues 2977–2996 (SNLS…QSVA) and 3005–3018 (AESN…QKLQ). Positions 3052 to 3062 (QAKEAKSEQET) are enriched in basic and acidic residues. The region spanning 3218-3355 (LTVEMIEKLN…AEVVKEFLTE (138 aa)) is the Fido 1 domain. The tract at residues 3222-4095 (MIEKLNHGLR…FNVVNYKKNN (874 aa)) is yopT-like. Residues 3354 to 3698 (TELGKKSSPQ…VDFINRAKNE (345 aa)) are binds bovine IgG2 Fc. 2 disordered regions span residues 3357 to 3415 (GKKS…PSVP) and 3432 to 3454 (AELK…ATGV). Polar residues-rich tracts occupy residues 3360-3379 (SSPQ…SPVT) and 3388-3401 (VENT…TIKQ). Residues 3443–3454 (KAAEKSEGATGV) are compositionally biased toward basic and acidic residues. The arm region stretch occupies residues 3535-3557 (IPEATVKQMSHLPEFDDILTEGA). In terms of domain architecture, Fido 2 spans 3640-3777 (LTVQMIENLN…SEVVVEFLKE (138 aa)). Residues 3670 to 3671 (KE), 3722 to 3724 (GNG), Arg-3728, and Gln-3757 each bind ATP. A compositionally biased stretch (basic and acidic residues) spans 3783-3798 (SKEDNEQNLEKTDRTS). Positions 3783 to 3829 (SKEDNEQNLEKTDRTSTDLTESAVENSAALSSGTVRSATVSETVTET) are disordered. Residues 3799–3815 (TDLTESAVENSAALSSG) show a composition bias toward polar residues. The segment covering 3816–3829 (TVRSATVSETVTET) has biased composition (low complexity). Active-site for cysteine protease activity residues include Cys-3910, His-4033, and Asp-4048.

This sequence in the central section; belongs to the fic family. It in the C-terminal section; belongs to the peptidase C58 family. In terms of assembly, immunoglobulin-binding protein. Post-translationally, the long form of the protein is probably processed, and/or the transcript may be subject to differential translational initiation.

It localises to the secreted. It is found in the cell outer membrane. It carries out the reaction L-tyrosyl-[protein] + ATP = O-(5'-adenylyl)-L-tyrosyl-[protein] + diphosphate. The catalysed reaction is L-threonyl-[protein] + ATP = 3-O-(5'-adenylyl)-L-threonyl-[protein] + diphosphate. Adenylyltransferase involved in virulence by mediating the addition of adenosine 5'-monophosphate (AMP) to specific tyrosine residue of host Rho GTPases RhoA, Rac and Cdc42. The resulting AMPylation inactivates Rho GTPases, thereby inhibiting actin assembly in infected cells. Probably also acts as a cysteine protease, which may play a central role after invasion of host cell and in virulence. Possible member (with IbpB) of a 2 partner secretion. Probably able to bind bovine epithelial cells (host cells). May participate in the formation of fibrils at the surface of the bacteria. The sequence is that of Protein adenylyltransferase and cysteine protease IbpA (ibpA) from Histophilus somni (strain 2336) (Haemophilus somnus).